The following is a 1231-amino-acid chain: Cohesin subunit SA-2 (1231 aa).

Methionine 1 carries the post-translational modification N-acetylmethionine. A disordered region spans residues 1-75; sequence MIAAPEIPTD…GSNRMNGHHQ (75 aa). A compositionally biased stretch (basic residues) spans 36-48; that stretch reads KQGKGKTCKKGKK. The SCD domain occupies 293–378; the sequence is FVHRYRDAIA…SRFKDRIVSM (86 aa). Lysine 607 carries the N6-acetyllysine modification. Phosphoserine occurs at positions 1058, 1061, 1064, and 1065. The tract at residues 1062 to 1087 is disordered; sequence GMSSRGSTVRSKKSKPSTGKRKVVEG. Residues 1071–1082 are compositionally biased toward basic residues; the sequence is RSKKSKPSTGKR. Threonine 1112 is subject to Phosphothreonine. Residues serine 1177 and serine 1178 each carry the phosphoserine modification.

It belongs to the SCC3 family. In terms of assembly, interacts directly with RAD21 in cohesin complex. Cohesin complexes are composed of a heterodimer between a SMC1 protein (SMC1A or SMC1B) and SMC3, which are attached via their hinge domain, and RAD21 which link them at their heads, and one STAG protein (STAG1, STAG2 or STAG3). In cohesin complexes, STAG2 is mutually exclusive with STAG1 and STAG3. Post-translationally, phosphorylated by PLK1. The large dissociation of cohesin from chromosome arms during prophase is partly due to its phosphorylation.

The protein resides in the nucleus. It localises to the chromosome. It is found in the centromere. Component of cohesin complex, a complex required for the cohesion of sister chromatids after DNA replication. The cohesin complex apparently forms a large proteinaceous ring within which sister chromatids can be trapped. At anaphase, the complex is cleaved and dissociates from chromatin, allowing sister chromatids to segregate. The cohesin complex may also play a role in spindle pole assembly during mitosis. The polypeptide is Cohesin subunit SA-2 (Stag2) (Mus musculus (Mouse)).